The sequence spans 392 residues: Odorant receptor 9a (392 aa).

Residues 1-41 are Cytoplasmic-facing; sequence MSDKVKGKKQEEKDQSLRVQILVYRCMGIDLWSPTMANDRP. A helical membrane pass occupies residues 42–62; sequence WLTFVTMGPLFLFMVPMFLAA. Topologically, residues 63 to 74 are extracellular; it reads HEYITQVSLLSD. Residues 75 to 95 form a helical membrane-spanning segment; sequence TLGSTFASMLTLVKFLLFCYH. Over 96–141 the chain is Cytoplasmic; sequence RKEFVGLIYHIRAILAKEIEVWPDAREIIEVENQSDQMLSLTYTRC. Residues 142 to 162 traverse the membrane as a helical segment; sequence FGLAGIFAALKPFVGIILSSI. Topologically, residues 163–202 are extracellular; sequence RGDEIHLELPHNGVYPYDLQVVMFYVPTYLWNVMASYSAV. Residues 203–223 form a helical membrane-spanning segment; that stretch reads TMALCVDSLLFFFTYNVCAIF. The Cytoplasmic segment spans residues 224-268; that stretch reads KIAKHRMIHLPAVGGKEELEGLVQVLLLHQKGLQIADHIADKYRP. Residues 269–289 form a helical membrane-spanning segment; it reads LIFLQFFLSALQICFIGFQVA. Residues 290-297 are Extracellular-facing; the sequence is DLFPNPQS. Residues 298 to 318 traverse the membrane as a helical segment; that stretch reads LYFIAFVGSLLIALFIYSKCG. The Cytoplasmic segment spans residues 319 to 362; the sequence is ENIKSASLDFGNGLYETNWTDFSPPTKRALLIAAMRAQRPCQMK. Residues 363-383 traverse the membrane as a helical segment; that stretch reads GYFFEASMATFSTIVRSAVSY. The Extracellular segment spans residues 384–392; it reads IMMLRSFNA.

It belongs to the insect chemoreceptor superfamily. Heteromeric odorant receptor channel (TC 1.A.69) family. Or1a subfamily. In terms of assembly, interacts with Orco. Complexes exist early in the endomembrane system in olfactory sensory neurons (OSNs), coupling these complexes to the conserved ciliary trafficking pathway. Expressed in olfactory sensory neurons in the antenna.

It localises to the cell membrane. Its function is as follows. Odorant receptor which mediates acceptance or avoidance behavior, depending on its substrates. The odorant receptor repertoire encodes a large collection of odor stimuli that vary widely in identity, intensity, and duration. May form a complex with Orco to form odorant-sensing units, providing sensitive and prolonged odorant signaling and calcium permeability. The polypeptide is Odorant receptor 9a (Or9a) (Drosophila melanogaster (Fruit fly)).